We begin with the raw amino-acid sequence, 319 residues long: Cytochrome c biogenesis protein CcsA (319 aa).

7 consecutive transmembrane segments (helical) span residues Ile-9–Leu-29, Gly-44–Gly-64, Leu-71–Leu-91, Met-143–Ile-163, Ile-225–Asn-245, Thr-259–His-273, and Ala-286–Leu-306.

This sequence belongs to the CcmF/CycK/Ccl1/NrfE/CcsA family. May interact with Ccs1.

The protein localises to the plastid. The protein resides in the chloroplast thylakoid membrane. Its function is as follows. Required during biogenesis of c-type cytochromes (cytochrome c6 and cytochrome f) at the step of heme attachment. This is Cytochrome c biogenesis protein CcsA from Oenothera parviflora (Small-flowered evening primrose).